The chain runs to 242 residues: Biosynthetic peptidoglycan transglycosylase (242 aa).

A helical transmembrane segment spans residues Ile19–Val39.

Belongs to the glycosyltransferase 51 family.

It is found in the cell inner membrane. It carries out the reaction [GlcNAc-(1-&gt;4)-Mur2Ac(oyl-L-Ala-gamma-D-Glu-L-Lys-D-Ala-D-Ala)](n)-di-trans,octa-cis-undecaprenyl diphosphate + beta-D-GlcNAc-(1-&gt;4)-Mur2Ac(oyl-L-Ala-gamma-D-Glu-L-Lys-D-Ala-D-Ala)-di-trans,octa-cis-undecaprenyl diphosphate = [GlcNAc-(1-&gt;4)-Mur2Ac(oyl-L-Ala-gamma-D-Glu-L-Lys-D-Ala-D-Ala)](n+1)-di-trans,octa-cis-undecaprenyl diphosphate + di-trans,octa-cis-undecaprenyl diphosphate + H(+). Its pathway is cell wall biogenesis; peptidoglycan biosynthesis. Peptidoglycan polymerase that catalyzes glycan chain elongation from lipid-linked precursors. This is Biosynthetic peptidoglycan transglycosylase from Citrobacter koseri (strain ATCC BAA-895 / CDC 4225-83 / SGSC4696).